A 411-amino-acid polypeptide reads, in one-letter code: Putative ion-transport protein YfeO (411 aa).

The next 11 membrane-spanning stretches (helical) occupy residues 9–29 (MLLL…VLIA), 54–74 (DSPF…GLII), 99–119 (ALPG…SLGP), 149–169 (ILAS…AALI), 186–206 (LFAP…FFHP), 223–243 (IASG…AVWC), 258–278 (VLIL…GGPL), 296–316 (LGAG…VIAA), 322–342 (GGRI…LHAH), 343–363 (VEAV…VLVV), and 386–406 (LLCI…LLAA).

It belongs to the chloride channel (TC 2.A.49) family.

It localises to the cell membrane. This is Putative ion-transport protein YfeO from Salmonella schwarzengrund (strain CVM19633).